The following is a 129-amino-acid chain: Small ribosomal subunit protein uS12 (129 aa).

The tract at residues 110–129 (RKQGRSRYGAHRKQVAATKK) is disordered.

This sequence belongs to the universal ribosomal protein uS12 family. In terms of assembly, part of the 30S ribosomal subunit. Contacts proteins S8 and S17. May interact with IF1 in the 30S initiation complex.

Its function is as follows. With S4 and S5 plays an important role in translational accuracy. In terms of biological role, interacts with and stabilizes bases of the 16S rRNA that are involved in tRNA selection in the A site and with the mRNA backbone. Located at the interface of the 30S and 50S subunits, it traverses the body of the 30S subunit contacting proteins on the other side and probably holding the rRNA structure together. The combined cluster of proteins S8, S12 and S17 appears to hold together the shoulder and platform of the 30S subunit. This chain is Small ribosomal subunit protein uS12, found in Rickettsia prowazekii (strain Madrid E).